The following is a 159-amino-acid chain: Phosphopantetheine adenylyltransferase (159 aa).

Position 10 (Thr-10) interacts with substrate. ATP contacts are provided by residues 10 to 11 (TF) and His-18. Residues Lys-42, Met-74, and Arg-88 each coordinate substrate. ATP is bound by residues 89–91 (GLR), Glu-99, and 124–130 (WSFISSS).

It belongs to the bacterial CoaD family. Homohexamer. The cofactor is Mg(2+).

Its subcellular location is the cytoplasm. The catalysed reaction is (R)-4'-phosphopantetheine + ATP + H(+) = 3'-dephospho-CoA + diphosphate. The protein operates within cofactor biosynthesis; coenzyme A biosynthesis; CoA from (R)-pantothenate: step 4/5. Functionally, reversibly transfers an adenylyl group from ATP to 4'-phosphopantetheine, yielding dephospho-CoA (dPCoA) and pyrophosphate. This Escherichia coli O7:K1 (strain IAI39 / ExPEC) protein is Phosphopantetheine adenylyltransferase.